The chain runs to 146 residues: MAILGIGTDIVEIARIHTVLVRCGERFIDRILSPIEYKQYHQQNNSVHFLAKRFAVKEAAAKALGTGICHGIAFVQFELFHDERGKPQLRLHEQAAQLARERHITRMHVTLADERYYTCAMVIFEGDIRSNDYSIQPNWYLSKIKP.

Residues Asp9 and Glu58 each contribute to the Mg(2+) site.

The protein belongs to the P-Pant transferase superfamily. AcpS family. The cofactor is Mg(2+).

Its subcellular location is the cytoplasm. The catalysed reaction is apo-[ACP] + CoA = holo-[ACP] + adenosine 3',5'-bisphosphate + H(+). Functionally, transfers the 4'-phosphopantetheine moiety from coenzyme A to a Ser of acyl-carrier-protein. The protein is Holo-[acyl-carrier-protein] synthase of Baumannia cicadellinicola subsp. Homalodisca coagulata.